A 54-amino-acid chain; its full sequence is uncharacterized protein (54 aa).

The disordered stretch occupies residues 1–38 (MFPNSNGPNKMKALVAPSNSSTTSKTNNNNLPPNGRSS). Over residues 17–38 (PSNSSTTSKTNNNNLPPNGRSS) the composition is skewed to low complexity.

This is an uncharacterized protein from Dictyostelium discoideum (Social amoeba).